We begin with the raw amino-acid sequence, 1774 residues long: Collagen alpha-1(XVIII) chain (1774 aa).

The signal sequence occupies residues 1–26; it reads MAPDPSRRLCLLLLLLLSCRLVPASA. The segment at 27-785 is nonhelical region 1 (NC1); it reads DGNSLSPLNP…QNPGRGLIKG (759 aa). 2 disordered regions span residues 47-113 and 218-269; these read DSLE…TPAV and LPPF…LEGK. Polar residues-rich tracts occupy residues 55–87 and 244–256; these read KPQN…TPAS and LSSS…SWGN. N-linked (GlcNAc...) asparagine glycans are attached at residues N354 and N361. Positions 365-482 constitute an FZ domain; sequence TSTSRCLPLP…SQEDGYCVFI (118 aa). Cystine bridges form between C370-C433, C380-C426, C417-C455, C444-C479, and C448-C468. The Laminin G-like domain occupies 522–704; that stretch reads GPDSNSGQVA…EDRASGDFGS (183 aa). N-linked (GlcNAc...) asparagine glycosylation is present at N585. Residues 681–1458 are disordered; that stretch reads RVSPVHCLDE…PPGPPGAMGA (778 aa). Basic and acidic residues predominate over residues 708 to 717; the sequence is ESSKSHKEDT. A Phosphothreonine modification is found at T730. Residues 786 to 812 form a triple-helical region 1 (COL1) region; sequence GMKGQKGEPGAQGPPGPAGPQGPAGPV. Residues 809–824 are compositionally biased toward low complexity; that stretch reads AGPVVQSPNSQPVPGA. Residues 813–822 form a nonhelical region 2 (NC2) region; the sequence is VQSPNSQPVP. The Collagen-like 1 domain maps to 823-878; the sequence is GAQGPPGPQGPPGKDGTPGRDGEPGDPGEDGRPGDTGPQGFPGTPGDVGPKGEKGD. The interval 823–896 is triple-helical region 2 (COL2); the sequence is GAQGPPGPQG…PGPPGPPGPS (74 aa). A compositionally biased stretch (basic and acidic residues) spans 839 to 855; sequence TPGRDGEPGDPGEDGRP. Pro residues predominate over residues 884–895; it reads RGPPGPPGPPGP. The interval 897-920 is nonhelical region 3 (NC3); sequence FRQDKLTFIDMEGSGFSGDIESLR. O-linked (Xyl...) (chondroitin sulfate) serine glycosylation is present at S910. Residues 921–1042 form a triple-helical region 3 (COL3) region; sequence GPRGFPGPPG…PGPPGPPGPG (122 aa). Residues 925 to 935 show a composition bias toward pro residues; that stretch reads FPGPPGPPGVP. An N-linked (GlcNAc...) asparagine glycan is attached at N947. A compositionally biased stretch (low complexity) spans 951–963; that stretch reads APGPAGLPGVPGK. 2 Collagen-like domains span residues 953-1007 and 1008-1041; these read GPAG…GSKG and DLGP…PPGP. Composition is skewed to pro residues over residues 967-982 and 1026-1041; these read PGFP…PGKE and PVGP…PPGP. The nonhelical region 4 (NC4) stretch occupies residues 1043-1065; it reads FAAGFDDMEGSGIPLWTTARSSD. 4 Collagen-like domains span residues 1066 to 1117, 1118 to 1147, 1162 to 1202, and 1216 to 1264; these read GLQG…GPKG, EKGM…PPGP, PGPE…GEPG, and QKGA…EPGD. Residues 1066–1148 are triple-helical region 4 (COL4); the sequence is GLQGPPGSPG…PGPPGPPGPV (83 aa). Residues 1138 to 1147 are compositionally biased toward pro residues; it reads LPGPPGPPGP. The tract at residues 1149-1162 is nonhelical region 5 (NC5); sequence IYVSSEDKAIVSTP. Residues 1163–1204 are triple-helical region 5 (COL5); sequence GPEGKPGYAGFPGPAGPKGDLGSKGEQGLPGPKGEKGEPGTI. The segment at 1205-1217 is nonhelical region 6 (NC6); sequence FSPDGRALGHPQK. A triple-helical region 6 (COL6) region spans residues 1218-1290; that stretch reads GAKGEPGFRG…PGPPGPPGMP (73 aa). The segment covering 1275 to 1289 has biased composition (pro residues); that stretch reads PGPPGPPGPPGPPGM. Positions 1291–1300 are nonhelical region 7 (NC7); that stretch reads IYDSNAFVES. The span at 1301-1317 shows a compositional bias: low complexity; it reads GRPGLPGQQGVQGPSGP. The segment at 1301-1333 is triple-helical region 7 (COL7); that stretch reads GRPGLPGQQGVQGPSGPKGDKGEVGPPGPPGQF. A nonhelical region 8 (NC8) region spans residues 1334 to 1345; it reads PIDLFHLEAEMK. Positions 1338–1362 are enriched in basic and acidic residues; it reads FHLEAEMKGDKGDRGDAGQKGERGE. The triple-helical region 8 (COL8) stretch occupies residues 1346–1369; sequence GDKGDRGDAGQKGERGEPGAPGGG. The Cell attachment site signature appears at 1351-1353; it reads RGD. Residues 1370 to 1376 are nonhelical region 9 (NC9); the sequence is FFSSSVP. 4 stretches are compositionally biased toward pro residues: residues 1376-1388, 1398-1407, 1418-1431, and 1441-1453; these read PGPP…PGIP, PPGPPGPQGP, PPGP…PSFP, and PGPP…PGPP. Residues 1377-1428 form a triple-helical region 9 (COL9) region; sequence GPPGPPGYPGIPGPKGESIRGPPGPPGPQGPPGIGYEGRQGPPGPPGPPGPP. Residues 1429 to 1441 are nonhelical region 10 (NC10); it reads SFPGPHRQTVSVP. Positions 1442–1459 are triple-helical region 10 (COL10); that stretch reads GPPGPPGPPGPPGAMGAS. The tract at residues 1460–1774 is nonhelical region 11 (NC11); that stretch reads AGQVRIWATY…ENSFMTSFSK (315 aa). The tract at residues 1474 to 1519 is non-collagenous domain 1 association domain; the sequence is DKIREVPEGWLIFVAEREELYVRVRNGFRKVLLEARTALPRGTGNE. The interval 1520–1590 is non-collagenous domain 1 hinge region; the sequence is VAALQPPLVQ…PPARPTLSLA (71 aa). Zn(2+) contacts are provided by H1591, H1593, D1595, H1601, and D1666. Disulfide bonds link C1623–C1763 and C1725–C1755.

This sequence belongs to the multiplexin collagen family. In terms of assembly, forms homotrimers. Recombinant non-collagenous domain 1 has stronger affinity to NID1, HSPG2 and laminin-1:NID1 complex and lower affinity to FBLN1 and FBLN2 than endostatin. Monomeric. Interacts with KDR/VEGFR2. Interacts with the ITGA5:ITGB1 complex. Interacts with NID1, HSPG2, laminin-1:NID1 complex, FBLN1 and FBLN2. In terms of processing, prolines at the third position of the tripeptide repeating unit (G-X-Y) of the triple-helical regions are hydroxylated. Undergoes proteolytic processing by CTSL/cathepsin-L and elastase-like proteases to generate both non-collagenous domain 1 trimers and endostatin monomers. In tissue extracts (brain, skeletal muscle, heart, kidney, testis and liver) predominantly bands of approximately 38 kDa are detected; recombinant non-collagenous domain 1 shows similar mobility. In vitro, several proteolytic cleavage sites in the non-collagenous domain 1 hinge region generating different endostatin-like peptides are reported. As to expression, expressed in liver, kidney, lung, skeletal muscle and testis.

It localises to the secreted. The protein resides in the extracellular space. It is found in the extracellular matrix. The protein localises to the basement membrane. Functionally, probably plays a major role in determining the retinal structure as well as in the closure of the neural tube. May regulate extracellular matrix-dependent motility and morphogenesis of endothelial and non-endothelial cells; the function requires homotrimerization and implicates MAPK signaling. Its function is as follows. Potently inhibits endothelial cell proliferation and angiogenesis. May inhibit angiogenesis by binding to the heparan sulfate proteoglycans involved in growth factor signaling. Inhibits VEGFA isoform VEGF165-induced endothelial cell proliferation and migration. Seems to inhibit VEGFA-mediated signaling by blocking the interaction of VEGFA to its receptor KDR/VEGFR2. Modulates endothelial cell migration in an integrin-dependent manner implicating integrin ITGA5:ITGB1 and to a lesser extent ITGAV:ITGB3 and ITGAV:ITGB5. May negatively regulate the activity of homotrimeric non-collagenous domain 1. In Mus musculus (Mouse), this protein is Collagen alpha-1(XVIII) chain.